A 123-amino-acid polypeptide reads, in one-letter code: Large ribosomal subunit protein uL18 (123 aa).

This sequence belongs to the universal ribosomal protein uL18 family. In terms of assembly, part of the 50S ribosomal subunit; part of the 5S rRNA/L5/L18/L25 subcomplex. Contacts the 5S and 23S rRNAs.

In terms of biological role, this is one of the proteins that bind and probably mediate the attachment of the 5S RNA into the large ribosomal subunit, where it forms part of the central protuberance. This is Large ribosomal subunit protein uL18 from Wolbachia sp. subsp. Brugia malayi (strain TRS).